We begin with the raw amino-acid sequence, 84 residues long: Small ribosomal subunit protein bS20 (84 aa).

Residues 1–22 (MPAPTKRERQNRKRFERNRSVR) form a disordered region. The span at 9–22 (RQNRKRFERNRSVR) shows a compositional bias: basic residues.

This sequence belongs to the bacterial ribosomal protein bS20 family.

Its function is as follows. Binds directly to 16S ribosomal RNA. This is Small ribosomal subunit protein bS20 from Rubrobacter xylanophilus (strain DSM 9941 / JCM 11954 / NBRC 16129 / PRD-1).